Consider the following 480-residue polypeptide: Sensor histidine kinase CusS (480 aa).

The Cytoplasmic segment spans residues 1–15; it reads MVSKPFQRPFSLATR. A helical membrane pass occupies residues 16–36; it reads LTFFISLATIAAFFAFAWIMI. Over 37–186 the chain is Periplasmic; that stretch reads HSVKVHFAEQ…LHYINDLMNK (150 aa). Residues 187 to 207 form a helical membrane-spanning segment; it reads LIMTASVISILIVFIVLLAVH. The 54-residue stretch at 207 to 260 folds into the HAMP domain; the sequence is HKGHAPIRSVSRQIQNITSKDLDVRLDPQTVPIELEQLVLSFNHMIERIEDVFT. The Cytoplasmic portion of the chain corresponds to 208–480; the sequence is KGHAPIRSVS…GTRFVIILPA (273 aa). A Histidine kinase domain is found at 268-480; sequence DIAHEIRTPI…GTRFVIILPA (213 aa). His271 carries the phosphohistidine; by autocatalysis modification.

Post-translationally, autophosphorylated.

The protein resides in the cell inner membrane. The catalysed reaction is ATP + protein L-histidine = ADP + protein N-phospho-L-histidine.. Functionally, member of the two-component regulatory system CusS/CusR involved in response to copper and silver. Acts as a copper/silver ion sensor. Activates CusR by phosphorylation. This chain is Sensor histidine kinase CusS (cusS), found in Escherichia coli O6:H1 (strain CFT073 / ATCC 700928 / UPEC).